We begin with the raw amino-acid sequence, 502 residues long: ATP synthase subunit alpha (502 aa).

Residue 169–176 participates in ATP binding; the sequence is GDRQTGKT.

This sequence belongs to the ATPase alpha/beta chains family. As to quaternary structure, F-type ATPases have 2 components, CF(1) - the catalytic core - and CF(0) - the membrane proton channel. CF(1) has five subunits: alpha(3), beta(3), gamma(1), delta(1), epsilon(1). CF(0) has three main subunits: a(1), b(2) and c(9-12). The alpha and beta chains form an alternating ring which encloses part of the gamma chain. CF(1) is attached to CF(0) by a central stalk formed by the gamma and epsilon chains, while a peripheral stalk is formed by the delta and b chains.

It localises to the cell membrane. The enzyme catalyses ATP + H2O + 4 H(+)(in) = ADP + phosphate + 5 H(+)(out). In terms of biological role, produces ATP from ADP in the presence of a proton gradient across the membrane. The alpha chain is a regulatory subunit. The sequence is that of ATP synthase subunit alpha from Bacillus velezensis (strain DSM 23117 / BGSC 10A6 / LMG 26770 / FZB42) (Bacillus amyloliquefaciens subsp. plantarum).